We begin with the raw amino-acid sequence, 369 residues long: Serine/threonine-protein phosphatase PP2A-1 catalytic subunit (369 aa).

Residues 1-57 (MDTDLDVPMQDAVTEQLTPTVSEDMDLNNNSSDNNAEEFSVDDLKPGSSGIADHKSS) are disordered. Mn(2+) is bound by residues Asp-117, His-119, Asp-145, and Asn-177. Residue His-178 is the Proton donor of the active site. Residues His-227 and His-301 each contribute to the Mn(2+) site. The disordered stretch occupies residues 348-369 (QYDPSVRPGEPSVSRKTPDYFL). Leu-369 is subject to Leucine methyl ester.

The protein belongs to the PPP phosphatase family. PP-2A subfamily. Inactivated in a complex with phosphatase methylesterase PPE1 (PP2Ai). Interacts with phosphatase 2A activator RRD2, which can reactivate PP2Ai by dissociating the catalytic subunit from the complex. Forms a ternary complex with RRD2-TAP42. It depends on Mn(2+) as a cofactor. Reversibly methyl esterified on Leu-369 by leucine carboxyl methyltransferase 1 (PPM1) and protein phosphatase methylesterase 1 (PPE1). Carboxyl methylation influences the affinity of the catalytic subunit for the different regulatory subunits, thereby modulating the PP2A holoenzyme's substrate specificity, enzyme activity and cellular localization.

It catalyses the reaction O-phospho-L-seryl-[protein] + H2O = L-seryl-[protein] + phosphate. The catalysed reaction is O-phospho-L-threonyl-[protein] + H2O = L-threonyl-[protein] + phosphate. Exact function not known, phosphatase 2A performs an essential cellular function. The sequence is that of Serine/threonine-protein phosphatase PP2A-1 catalytic subunit (PPH21) from Saccharomyces cerevisiae (strain ATCC 204508 / S288c) (Baker's yeast).